Consider the following 392-residue polypeptide: Alaserpin (392 aa).

Residues 1–16 (MKIIMCIFGLAALAMA) form the signal peptide. A glycan (N-linked (GlcNAc...) asparagine) is linked at Asn-85.

The protein belongs to the serpin family. As to expression, hemolymph.

It localises to the secreted. It is found in the extracellular space. In terms of biological role, inhibits elastase. This chain is Alaserpin, found in Manduca sexta (Tobacco hawkmoth).